The following is a 499-amino-acid chain: Centrosomal protein of 57 kDa (499 aa).

Low complexity predominate over residues M1 to S16. The interval M1–P41 is disordered. The span at S22–P35 shows a compositional bias: polar residues. S53 carries the phosphoserine modification. A centrosome localization domain (CLD) region spans residues T58–E239. Residues E63–R242 are a coiled coil. 2 disordered regions span residues T255–N275 and L424–N476. The interval G278–L490 is mediates interaction with microtubules. Positions P388–Q491 form a coiled coil. The span at Q427–D443 shows a compositional bias: basic and acidic residues. Low complexity predominate over residues S448–T458. Over residues S460–R474 the composition is skewed to basic and acidic residues.

The protein belongs to the translokin family. Homodimer and homooligomer. Interacts with FGF2 and RAP80. Does not interact with FGF1 or FGF2 isoform 24 kDa. Interacts with microtubules. Ubiquitous (at protein level).

Its subcellular location is the nucleus. It localises to the cytoplasm. It is found in the cytoskeleton. The protein localises to the microtubule organizing center. The protein resides in the centrosome. Its function is as follows. Centrosomal protein which may be required for microtubule attachment to centrosomes. May act by forming ring-like structures around microtubules. Mediates nuclear translocation and mitogenic activity of the internalized growth factor FGF2. In Rattus norvegicus (Rat), this protein is Centrosomal protein of 57 kDa (Cep57).